The following is a 92-amino-acid chain: DNA-directed RNA polymerase subunit Rpo11 (92 aa).

Belongs to the archaeal Rpo11/eukaryotic RPB11/RPC19 RNA polymerase subunit family. In terms of assembly, part of the 13-subunit RNA polymerase complex.

It localises to the cytoplasm. The catalysed reaction is RNA(n) + a ribonucleoside 5'-triphosphate = RNA(n+1) + diphosphate. Functionally, DNA-dependent RNA polymerase (RNAP) catalyzes the transcription of DNA into RNA using the four ribonucleoside triphosphates as substrates. This chain is DNA-directed RNA polymerase subunit Rpo11, found in Saccharolobus solfataricus (strain ATCC 35092 / DSM 1617 / JCM 11322 / P2) (Sulfolobus solfataricus).